Reading from the N-terminus, the 137-residue chain is MLVPKRVKHRREFRGKMRGEAKGGKEVSFGEYGLQATTSSWITNRQIEAARIAMTRYMKRGGKVWIKIFPHKSYTAKAIGVRMGSGKGAPEGWVAPVKRGKVMFEVAGVSEEIAREALRLASHKLPVKCKFVKREAE.

Belongs to the universal ribosomal protein uL16 family. In terms of assembly, part of the 50S ribosomal subunit.

Binds 23S rRNA and is also seen to make contacts with the A and possibly P site tRNAs. In Streptococcus equi subsp. zooepidemicus (strain H70), this protein is Large ribosomal subunit protein uL16.